The following is a 276-amino-acid chain: Diaminopimelate epimerase (276 aa).

Substrate is bound by residues Asn-13, Gln-46, and Asn-66. Cys-75 acts as the Proton donor in catalysis. Residues 76-77, Asn-159, Asn-192, and 210-211 each bind substrate; these read GN and ER. Cys-219 acts as the Proton acceptor in catalysis. Residue 220 to 221 coordinates substrate; it reads GT.

This sequence belongs to the diaminopimelate epimerase family. Homodimer.

Its subcellular location is the cytoplasm. The enzyme catalyses (2S,6S)-2,6-diaminopimelate = meso-2,6-diaminopimelate. It participates in amino-acid biosynthesis; L-lysine biosynthesis via DAP pathway; DL-2,6-diaminopimelate from LL-2,6-diaminopimelate: step 1/1. Its function is as follows. Catalyzes the stereoinversion of LL-2,6-diaminopimelate (L,L-DAP) to meso-diaminopimelate (meso-DAP), a precursor of L-lysine and an essential component of the bacterial peptidoglycan. The sequence is that of Diaminopimelate epimerase from Pseudomonas syringae pv. syringae (strain B728a).